A 163-amino-acid chain; its full sequence is Neurotrophin-3 (163 aa).

Positions 1–3 are cleaved as a signal peptide; the sequence is IQS. A propeptide spanning residues 4 to 119 is cleaved from the precursor; the sequence is TSMDQGILTE…VLNRTSRRKR (116 aa). An N-linked (GlcNAc...) asparagine glycan is attached at Asn112. A disordered region spans residues 113-133; it reads RTSRRKREGKSHRGEYSVCDS. Over residues 123–133 the composition is skewed to basic and acidic residues; that stretch reads SHRGEYSVCDS.

The protein belongs to the NGF-beta family.

The protein localises to the secreted. Seems to promote the survival of visceral and proprioceptive sensory neurons. In Charina bottae (Northern rubber boa), this protein is Neurotrophin-3 (NTF3).